The chain runs to 366 residues: Chorismate synthase (366 aa).

2 residues coordinate NADP(+): arginine 48 and arginine 54. FMN is bound by residues 125–127 (RSS), 238–239 (NA), glycine 278, 293–297 (KPTSS), and arginine 319.

This sequence belongs to the chorismate synthase family. In terms of assembly, homotetramer. FMNH2 is required as a cofactor.

The enzyme catalyses 5-O-(1-carboxyvinyl)-3-phosphoshikimate = chorismate + phosphate. It participates in metabolic intermediate biosynthesis; chorismate biosynthesis; chorismate from D-erythrose 4-phosphate and phosphoenolpyruvate: step 7/7. In terms of biological role, catalyzes the anti-1,4-elimination of the C-3 phosphate and the C-6 proR hydrogen from 5-enolpyruvylshikimate-3-phosphate (EPSP) to yield chorismate, which is the branch point compound that serves as the starting substrate for the three terminal pathways of aromatic amino acid biosynthesis. This reaction introduces a second double bond into the aromatic ring system. The chain is Chorismate synthase from Burkholderia orbicola (strain MC0-3).